The chain runs to 278 residues: Tryptophan synthase alpha chain (278 aa).

Residues Glu61 and Asp72 each act as proton acceptor in the active site.

This sequence belongs to the TrpA family. In terms of assembly, tetramer of two alpha and two beta chains.

It carries out the reaction (1S,2R)-1-C-(indol-3-yl)glycerol 3-phosphate + L-serine = D-glyceraldehyde 3-phosphate + L-tryptophan + H2O. Its pathway is amino-acid biosynthesis; L-tryptophan biosynthesis; L-tryptophan from chorismate: step 5/5. Its function is as follows. The alpha subunit is responsible for the aldol cleavage of indoleglycerol phosphate to indole and glyceraldehyde 3-phosphate. This is Tryptophan synthase alpha chain from Shewanella oneidensis (strain ATCC 700550 / JCM 31522 / CIP 106686 / LMG 19005 / NCIMB 14063 / MR-1).